We begin with the raw amino-acid sequence, 681 residues long: PTS system glucose-specific EIICBA component (681 aa).

The region spanning 3-414 (KKLFGQLQRI…LKYKTPGRED (412 aa)) is the PTS EIIC type-1 domain. The next 10 membrane-spanning stretches (helical) occupy residues 16 to 36 (LMLPVAILPAAGLLLAIGTAI), 73 to 93 (MIFALGVAIGLAGGDGVAAIA), 126 to 146 (ILGIPTLQTGVFGGIIIGALA), 170 to 190 (FVPIMMATTSFILAFPMALIW), 199 to 219 (AFSTGLLDSNTGVAVFLFGFI), 273 to 293 (FMQGEFPVMMFGLPAAALAIY), 303 to 323 (VVAGLMGSAALTSFLTGITEP), 328 to 348 (FLFVAPLLFFIHAVLDGLSFL), 355 to 375 (VHLGYTFSGGFIDYVLLGVLP), and 383 to 403 (VIPVGLVYAVIYYFVFRFLIV). The PTS EIIB type-1 domain occupies 425–506 (TELPYAVLEA…QQIMNGQVVE (82 aa)). C447 serves as the catalytic Phosphocysteine intermediate; for EIIB activity. Positions 551–655 (DQVFSEKMMG…SDITPIIVTQ (105 aa)) constitute a PTS EIIA type-1 domain. The active-site Tele-phosphohistidine intermediate; for EIIA activity is the H603.

The protein resides in the cell membrane. The enzyme catalyses N(pros)-phospho-L-histidyl-[protein] + D-glucose(out) = D-glucose 6-phosphate(in) + L-histidyl-[protein]. In terms of biological role, the phosphoenolpyruvate-dependent sugar phosphotransferase system (sugar PTS), a major carbohydrate active transport system, catalyzes the phosphorylation of incoming sugar substrates concomitantly with their translocation across the cell membrane. This system is involved in glucose transport. This chain is PTS system glucose-specific EIICBA component (ptsG), found in Staphylococcus aureus (strain JH9).